The primary structure comprises 147 residues: E3 ubiquitin-protein ligase RNF181 homolog (147 aa).

The RING-type; atypical zinc-finger motif lies at 70 to 111; it reads CSVCKEPAEEGQKYRILPCKHEFHEECILLWLKKTNSCPLCR.

The protein belongs to the RNF181 family.

It carries out the reaction S-ubiquitinyl-[E2 ubiquitin-conjugating enzyme]-L-cysteine + [acceptor protein]-L-lysine = [E2 ubiquitin-conjugating enzyme]-L-cysteine + N(6)-ubiquitinyl-[acceptor protein]-L-lysine.. It functions in the pathway protein modification; protein ubiquitination. In terms of biological role, E3 ubiquitin-protein ligase which accepts ubiquitin from an E2 ubiquitin-conjugating enzyme in the form of a thioester and then directly transfers the ubiquitin to targeted substrates. This chain is E3 ubiquitin-protein ligase RNF181 homolog, found in Drosophila melanogaster (Fruit fly).